A 199-amino-acid polypeptide reads, in one-letter code: dITP/XTP pyrophosphatase (199 aa).

Residue 7 to 12 participates in substrate binding; the sequence is TGNAGK. The Proton acceptor role is filled by Asp-68. Asp-68 lines the Mg(2+) pocket. Residues Ser-69, 153–156, Lys-176, and 181–182 each bind substrate; these read FGYD and HR.

Belongs to the HAM1 NTPase family. Homodimer. The cofactor is Mg(2+).

The catalysed reaction is XTP + H2O = XMP + diphosphate + H(+). The enzyme catalyses dITP + H2O = dIMP + diphosphate + H(+). It catalyses the reaction ITP + H2O = IMP + diphosphate + H(+). Its function is as follows. Pyrophosphatase that catalyzes the hydrolysis of nucleoside triphosphates to their monophosphate derivatives, with a high preference for the non-canonical purine nucleotides XTP (xanthosine triphosphate), dITP (deoxyinosine triphosphate) and ITP. Seems to function as a house-cleaning enzyme that removes non-canonical purine nucleotides from the nucleotide pool, thus preventing their incorporation into DNA/RNA and avoiding chromosomal lesions. This chain is dITP/XTP pyrophosphatase, found in Halorhodospira halophila (strain DSM 244 / SL1) (Ectothiorhodospira halophila (strain DSM 244 / SL1)).